Reading from the N-terminus, the 325-residue chain is NADH-quinone oxidoreductase subunit H (325 aa).

The next 8 helical transmembrane spans lie at 11–31 (ILIS…CGAF), 81–101 (AIFT…FAIV), 114–134 (IGIL…LFAG), 154–174 (LSYE…VGSF), 186–206 (VWNV…GVAV), 237–257 (FFVG…TLFF), 265–285 (LPPF…FILI), and 304–324 (VCLP…LYNA).

This sequence belongs to the complex I subunit 1 family. NDH-1 is composed of 13 different subunits. Subunits NuoA, H, J, K, L, M, N constitute the membrane sector of the complex.

Its subcellular location is the cell inner membrane. It carries out the reaction a quinone + NADH + 5 H(+)(in) = a quinol + NAD(+) + 4 H(+)(out). Functionally, NDH-1 shuttles electrons from NADH, via FMN and iron-sulfur (Fe-S) centers, to quinones in the respiratory chain. The immediate electron acceptor for the enzyme in this species is believed to be ubiquinone. Couples the redox reaction to proton translocation (for every two electrons transferred, four hydrogen ions are translocated across the cytoplasmic membrane), and thus conserves the redox energy in a proton gradient. This subunit may bind ubiquinone. The sequence is that of NADH-quinone oxidoreductase subunit H from Yersinia pseudotuberculosis serotype O:3 (strain YPIII).